Here is a 122-residue protein sequence, read N- to C-terminus: Small ribosomal subunit protein uS13 (122 aa).

The interval 93–122 is disordered; it reads RRGLPVRGQKTKTNARTRKGPKKTIANKKK.

The protein belongs to the universal ribosomal protein uS13 family. In terms of assembly, part of the 30S ribosomal subunit. Forms a loose heterodimer with protein S19. Forms two bridges to the 50S subunit in the 70S ribosome.

Located at the top of the head of the 30S subunit, it contacts several helices of the 16S rRNA. In the 70S ribosome it contacts the 23S rRNA (bridge B1a) and protein L5 of the 50S subunit (bridge B1b), connecting the 2 subunits; these bridges are implicated in subunit movement. Contacts the tRNAs in the A and P-sites. This is Small ribosomal subunit protein uS13 from Clostridium beijerinckii (strain ATCC 51743 / NCIMB 8052) (Clostridium acetobutylicum).